The primary structure comprises 500 residues: Serine carboxypeptidase 3 (500 aa).

The first 21 residues, 1–21 (MATTPRLASLLLLLALCAAAA), serve as a signal peptide directing secretion. A propeptide spanning residues 22 to 73 (GALRLPPDASFPGAQAERLIRALNLLPGRPRRGLGAGAEDVAPGQLLERRVT) is cleaved from the precursor. 3 cysteine pairs are disulfide-bonded: Cys-126–Cys-366, Cys-294–Cys-309, and Cys-332–Cys-337. Asn-144 is a glycosylation site (N-linked (GlcNAc...) asparagine). Residue Ser-216 is part of the active site. Asp-404 is a catalytic residue. Cys-407 serves as a coordination point for substrate. His-461 is a catalytic residue. A propeptide spanning residues 485 to 500 (ESVPEEEPATTFYAAI) is cleaved from the precursor.

Belongs to the peptidase S10 family. As to quaternary structure, monomer.

It carries out the reaction Release of a C-terminal amino acid with broad specificity.. This Triticum aestivum (Wheat) protein is Serine carboxypeptidase 3 (CBP3).